The chain runs to 1500 residues: Carbamoyl-phosphate synthase [ammonia], mitochondrial (1500 aa).

The transit peptide at 1–38 directs the protein to the mitochondrion; the sequence is MTRILTACKVVKTLKSGFGFANVTTKRQWDFSRPGIRL. The anthranilate phosphoribosyltransferase homolog stretch occupies residues 39–218; sequence LSVKAKTAHI…VKVFGKGNPT (180 aa). An N6-acetyllysine; alternate mark is found at K44, K55, K57, and K119. Residues K44, K55, K57, and K119 each carry the N6-succinyllysine; alternate modification. The residue at position 55 (K55) is an N6-glutaryllysine; alternate. At S148 the chain carries Phosphoserine. K157 and K171 each carry N6-acetyllysine; alternate. At K157 the chain carries N6-succinyllysine; alternate. The residue at position 171 (K171) is an N6-glutaryllysine; alternate. K176 carries the N6-glutaryllysine modification. K182 is modified (N6-acetyllysine). S189 bears the Phosphoserine mark. K197 is modified (N6-acetyllysine). An N6-acetyllysine; alternate mark is found at K207, K210, K214, K219, and K228. Position 207 is an N6-succinyllysine; alternate (K207). K207, K210, K214, K219, and K228 each carry N6-glutaryllysine; alternate. Residue K214 is modified to N6-succinyllysine; alternate. The Glutamine amidotransferase type-1 domain occupies 219-404; sequence KVVAVDCGIK…FSLIKKGKGT (186 aa). N6-glutaryllysine is present on K237. At K279 the chain carries N6-acetyllysine. 4 positions are modified to N6-acetyllysine; alternate: K280, K287, K307, and K310. K280 carries the N6-glutaryllysine; alternate modification. K287 and K307 each carry N6-succinyllysine; alternate. N6-glutaryllysine; alternate is present on residues K307 and K310. An N6-succinyllysine modification is found at K400. K402 and K412 each carry N6-succinyllysine; alternate. Residues K402, K412, K453, and K458 each carry the N6-glutaryllysine; alternate modification. An N6-acetyllysine; alternate mark is found at K412, K453, K458, K522, K527, and K532. An N6-succinyllysine; alternate mark is found at K458, K522, and K527. 2 positions are modified to N6-glutaryllysine; alternate: K527 and K532. S537 bears the Phosphoserine; alternate mark. O-linked (GlcNAc) serine; alternate glycosylation is present at S537. Position 540 is a phosphoserine (S540). The 193-residue stretch at 551 to 743 folds into the ATP-grasp 1 domain; it reads SDKLNEINEK…LAFIAAKIAL (193 aa). Residues K553 and K560 each carry the N6-acetyllysine; alternate modification. Residues K553 and K560 each carry the N6-succinyllysine; alternate modification. K553 is modified (N6-glutaryllysine; alternate). Residue S569 is modified to Phosphoserine. An N6-acetyllysine; alternate mark is found at K575, K603, and K612. An N6-succinyllysine; alternate mark is found at K575, K603, and K612. K630 is modified (N6-acetyllysine). K728 carries the post-translational modification N6-glutaryllysine. 12 positions are modified to N6-acetyllysine; alternate: K751, K757, K772, K793, K811, K831, K840, K841, K856, K875, K889, and K892. Residues K751 and K757 each carry the N6-succinyllysine; alternate modification. Residues K757, K772, K793, and K811 each carry the N6-glutaryllysine; alternate modification. An N6-succinyllysine; alternate modification is found at K793. 2 positions are modified to N6-succinyllysine; alternate: K831 and K840. Residues K841, K856, K875, K889, and K892 each carry the N6-glutaryllysine; alternate modification. An N6-succinyllysine; alternate mark is found at K875, K889, and K892. 2 positions are modified to phosphoserine: S896 and S898. 3 positions are modified to N6-acetyllysine; alternate: K908, K915, and K919. 3 positions are modified to N6-glutaryllysine; alternate: K908, K915, and K919. N6-succinyllysine; alternate occurs at positions 915 and 919. K935 carries the N6-acetyllysine modification. A Phosphoserine modification is found at S1036. Residue K1074 is modified to N6-acetyllysine; alternate. K1074 carries the N6-succinyllysine; alternate modification. Residue K1074 is modified to N6-glutaryllysine; alternate. S1079, S1090, and S1093 each carry phosphoserine. One can recognise an ATP-grasp 2 domain in the interval 1093–1284; sequence SAVLDELKVA…FIDVATKVMI (192 aa). At K1100 the chain carries N6-acetyllysine; alternate. At K1100 the chain carries N6-succinyllysine; alternate. An N6-succinyllysine modification is found at K1149. K1168 and K1183 each carry N6-acetyllysine; alternate. N6-succinyllysine; alternate occurs at positions 1168 and 1183. Residues K1168 and K1183 each carry the N6-glutaryllysine; alternate modification. S1203 bears the Phosphoserine mark. At K1222 the chain carries N6-acetyllysine. K1224 carries the N6-glutaryllysine modification. K1232, K1269, and K1291 each carry N6-acetyllysine; alternate. N6-succinyllysine; alternate occurs at positions 1232, 1269, and 1291. O-linked (GlcNAc) serine glycosylation occurs at S1331. Residue T1332 is glycosylated (O-linked (GlcNAc) threonine). In terms of domain architecture, MGS-like spans 1355–1500; the sequence is FKIPQKGILI…YRQYSAGKAA (146 aa). K1356 bears the N6-acetyllysine; alternate mark. N6-succinyllysine; alternate is present on residues K1356 and K1360. N6-glutaryllysine; alternate is present on residues K1356 and K1360. Positions 1391, 1394, and 1410 each coordinate N-acetyl-L-glutamate. Phosphoserine occurs at positions 1419 and 1431. Residues N1437 and N1440 each contribute to the N-acetyl-L-glutamate site. K1444 is subject to N6-acetyllysine; alternate. K1444 carries the post-translational modification N6-succinyllysine; alternate. N1449 is an N-acetyl-L-glutamate binding site. K1471, K1479, and K1486 each carry N6-acetyllysine; alternate. 3 positions are modified to N6-succinyllysine; alternate: K1471, K1479, and K1486. N6-glutaryllysine; alternate is present on residues K1479 and K1486.

In terms of assembly, can form homooligomers (monomers as predominant form and dimers). (Microbial infection) Interacts with P.berghei (ANKA strain) phospholipid scramblase PLSCR; the interaction is involved in the interaction between parasite sporozoites and host hepatocytes. Undergoes proteolytic cleavage in the C-terminal region corresponding to the loss of approximately 12 AA residues from the C-terminus. Post-translationally, acetylation of Lys-287, Lys-603, Lys-841 and Lys-1291 is observed in liver mitochondria from fasted mice but not from fed mice. In terms of processing, succinylated at Lys-44, Lys-287 and Lys-1291. Desuccinylated at Lys-1291 by SIRT5, leading to activation. Glutarylated. Glutarylation levels increase during fasting. Deglutarylated by SIRT5 at Lys-55, Lys-219, Lys-412, Lys-889, Lys-892, Lys-915, Lys-1360 and Lys-1486, leading to activation. Expressed in hepatocytes (at protein level).

It is found in the mitochondrion. The protein resides in the nucleus. Its subcellular location is the nucleolus. The protein localises to the cell membrane. The enzyme catalyses hydrogencarbonate + NH4(+) + 2 ATP = carbamoyl phosphate + 2 ADP + phosphate + 2 H(+). With respect to regulation, requires N-acetyl-L-glutamate (NAG) as an allosteric activator. Functionally, involved in the urea cycle of ureotelic animals where the enzyme plays an important role in removing excess ammonia from the cell. This Mus musculus (Mouse) protein is Carbamoyl-phosphate synthase [ammonia], mitochondrial (Cps1).